The chain runs to 173 residues: Photosystem I assembly protein Ycf3 (173 aa).

TPR repeat units follow at residues 35–68 (AYVY…EDNP), 72–105 (GETL…NSNQ), and 120–153 (GRIA…NPGG).

The protein belongs to the Ycf3 family.

It is found in the cellular thylakoid membrane. Functionally, essential for the assembly of the photosystem I (PSI) complex. May act as a chaperone-like factor to guide the assembly of the PSI subunits. This Parasynechococcus marenigrum (strain WH8102) protein is Photosystem I assembly protein Ycf3.